Here is an 80-residue protein sequence, read N- to C-terminus: U4-theraphotoxin-Spl1a (80 aa).

An N-terminal signal peptide occupies residues 1–21; the sequence is MKASLFAVIFGLVVLCACSFA. Positions 22-50 are excised as a propeptide; the sequence is EDQFASPNELLKSMFVESTHELTPEVEGR. Intrachain disulfides connect C52/C66, C59/C71, and C65/C75. Leucine amide is present on L79.

This sequence belongs to the neurotoxin 30 (phrixotoxin) family. In terms of tissue distribution, expressed by the venom gland.

The protein resides in the secreted. Its function is as follows. Probable ion channel inhibitor. Shows insecticidal activity when injected into mealworms. The chain is U4-theraphotoxin-Spl1a from Selenotypus plumipes (Australian featherleg tarantula).